A 1940-amino-acid chain; its full sequence is Myosin-1B (1940 aa).

Residues 33–82 enclose the Myosin N-terminal SH3-like domain; it reads DAKSSVFVVHAKESYVKSTIQSKESGKVTVKTEGGETLTVKEDQIFSMNP. The Myosin motor domain occupies 86–783; that stretch reads DKIEDMAMMT…LLGLLEEMRD (698 aa). Lys130 is modified (N6,N6,N6-trimethyllysine). An ATP-binding site is contributed by 179–186; sequence GESGAGKT. 2 actin-binding regions span residues 660 to 682 and 762 to 776; these read LNKLMSNLRSTHPHFVRCLIPNE and KFGHTKVFFKAGLLG. An IQ domain is found at 786–815; it reads LAQLITRTQARCRGFLMRVEFKKMMERRES. Residues 844 to 1940 adopt a coiled-coil conformation; sequence LLKSAESEKE…EIGKKAESEE (1097 aa). Positions 1912-1940 are disordered; it reads EERADIAESQVNKLRAKSREIGKKAESEE. Positions 1928–1940 are enriched in basic and acidic residues; the sequence is KSREIGKKAESEE.

This sequence belongs to the TRAFAC class myosin-kinesin ATPase superfamily. Myosin family. In terms of assembly, muscle myosin is a hexameric protein that consists of 2 heavy chain subunits (MHC), 2 alkali light chain subunits (MLC) and 2 regulatory light chain subunits (MLC-2).

It is found in the cytoplasm. The protein localises to the myofibril. Its function is as follows. Muscle contraction. The protein is Myosin-1B (MYH1B) of Gallus gallus (Chicken).